Consider the following 251-residue polypeptide: Uridylate kinase (251 aa).

19-22 provides a ligand contact to ATP; it reads KLSG. Residue glycine 61 coordinates UMP. Residues glycine 62 and arginine 66 each contribute to the ATP site. UMP-binding positions include aspartate 81 and 142 to 149; that span reads TGNPYFTT. ATP is bound by residues threonine 169, tyrosine 175, and aspartate 178.

The protein belongs to the UMP kinase family. Homohexamer.

It localises to the cytoplasm. It carries out the reaction UMP + ATP = UDP + ADP. It functions in the pathway pyrimidine metabolism; CTP biosynthesis via de novo pathway; UDP from UMP (UMPK route): step 1/1. Its activity is regulated as follows. Inhibited by UTP. Its function is as follows. Catalyzes the reversible phosphorylation of UMP to UDP. This chain is Uridylate kinase, found in Anaeromyxobacter dehalogenans (strain 2CP-C).